A 111-amino-acid polypeptide reads, in one-letter code: MEAKATAKYVRVSPRKAGQICDLVRGKNVDEALAILKFTPRGAASIIAKVVKSAKANAENNHEMDTEKLYIASIVANQGPTMKRFMPRAMGRATTIRKRTSHIEVVVKEKK.

It belongs to the universal ribosomal protein uL22 family. In terms of assembly, part of the 50S ribosomal subunit.

Functionally, this protein binds specifically to 23S rRNA; its binding is stimulated by other ribosomal proteins, e.g. L4, L17, and L20. It is important during the early stages of 50S assembly. It makes multiple contacts with different domains of the 23S rRNA in the assembled 50S subunit and ribosome. The globular domain of the protein is located near the polypeptide exit tunnel on the outside of the subunit, while an extended beta-hairpin is found that lines the wall of the exit tunnel in the center of the 70S ribosome. This is Large ribosomal subunit protein uL22 from Clostridioides difficile (strain 630) (Peptoclostridium difficile).